Here is a 1262-residue protein sequence, read N- to C-terminus: Isoleucine--tRNA ligase, cytoplasmic (1262 aa).

Methionine 1 bears the N-acetylmethionine mark. The short motif at 48–58 (PFATGLPHYGH) is the 'HIGH' region element. Positions 600 to 604 (KMSKR) match the 'KMSKS' region motif. Lysine 603 serves as a coordination point for ATP. Position 1049 is a phosphoserine (serine 1049). A Phosphothreonine modification is found at threonine 1058.

It belongs to the class-I aminoacyl-tRNA synthetase family. In terms of assembly, part of a multisubunit complex that groups tRNA ligases for Arg (RARS1), Asp (DARS1), Gln (QARS1), Ile (IARS1), Leu (LARS1), Lys (KARS1), Met (MARS1) the bifunctional ligase for Glu and Pro (EPRS1) and the auxiliary subunits AIMP1/p43, AIMP2/p38 and EEF1E1/p18.

Its subcellular location is the cytoplasm. The protein localises to the cytosol. The catalysed reaction is tRNA(Ile) + L-isoleucine + ATP = L-isoleucyl-tRNA(Ile) + AMP + diphosphate. Catalyzes the specific attachment of an amino acid to its cognate tRNA in a 2 step reaction: the amino acid (AA) is first activated by ATP to form AA-AMP and then transferred to the acceptor end of the tRNA. The protein is Isoleucine--tRNA ligase, cytoplasmic (Iars1) of Mus musculus (Mouse).